A 1148-amino-acid chain; its full sequence is Trafficking protein particle complex subunit 9 (1148 aa).

Phosphoserine occurs at positions 566 and 953.

It belongs to the NIBP family. Component of the multisubunit TRAPP (transport protein particle) complex, which includes at least TRAPPC2, TRAPPC2L, TRAPPC3, TRAPPC3L, TRAPPC4, TRAPPC5, TRAPPC8, TRAPPC9, TRAPPC10, TRAPPC11 and TRAPPC12. Directly interacts with IKBKB and MAP3K14. Expressed at high levels in muscle and kidney and to a lower extent in brain, heart and placenta.

It localises to the golgi apparatus. The protein resides in the cis-Golgi network. The protein localises to the endoplasmic reticulum. Its subcellular location is the cytoplasm. In terms of biological role, functions as an activator of NF-kappa-B through increased phosphorylation of the IKK complex. May function in neuronal cells differentiation. May play a role in vesicular transport from endoplasmic reticulum to Golgi. This chain is Trafficking protein particle complex subunit 9 (TRAPPC9), found in Homo sapiens (Human).